The sequence spans 194 residues: Large ribosomal subunit protein bL9c (194 aa).

The N-terminal 39 residues, 1 to 39 (MASSTLSSLSSTPLQHSFAANLKTCSQFPNKSSGFMVFA), are a transit peptide targeting the chloroplast.

The protein belongs to the bacterial ribosomal protein bL9 family. Part of the 50S ribosomal subunit.

Its subcellular location is the plastid. The protein localises to the chloroplast. Functionally, binds to the 23S rRNA. The polypeptide is Large ribosomal subunit protein bL9c (RPL9) (Pisum sativum (Garden pea)).